Consider the following 148-residue polypeptide: Large ribosomal subunit protein bL9 (148 aa).

This sequence belongs to the bacterial ribosomal protein bL9 family.

Its function is as follows. Binds to the 23S rRNA. This chain is Large ribosomal subunit protein bL9, found in Pseudomonas savastanoi pv. phaseolicola (strain 1448A / Race 6) (Pseudomonas syringae pv. phaseolicola (strain 1448A / Race 6)).